Consider the following 141-residue polypeptide: Zinc finger protein 593 homolog (141 aa).

Residues 1 to 32 (MGRYSGHGGTHTKKKQYKRARSTKNRAKDIDQ) form a disordered region. The span at 10 to 25 (THTKKKQYKRARSTKN) shows a compositional bias: basic residues. The C2H2-type zinc finger occupies 60 to 84 (NYCIHCSKHFVTNEDLQSHIKGKPH).

This sequence belongs to the ZNF593/BUD20 C2H2-type zinc-finger protein family. Associates with pre-60S ribosomal particles; released from the pre-60S particle very early in the cytoplasm.

The protein localises to the nucleus. The protein resides in the cytoplasm. Involved in pre-60S ribosomal particles maturation by promoting the nuclear export of the 60S ribosome. This is Zinc finger protein 593 homolog from Dictyostelium discoideum (Social amoeba).